A 379-amino-acid polypeptide reads, in one-letter code: Pathogen-associated molecular patterns-induced protein A70 (379 aa).

A helical transmembrane segment spans residues 7–29 (VASFFTPTTLFLLLNLMIGTIVV). Asn122 carries N-linked (GlcNAc...) asparagine glycosylation. The disordered stretch occupies residues 133–154 (TGSDPHSHSHSHLDLHPDPAPA). Positions 137–149 (PHSHSHSHLDLHP) are enriched in basic and acidic residues. Asn170 carries an N-linked (GlcNAc...) asparagine glycan. 2 disordered regions span residues 216-238 (PEED…LTRA) and 256-347 (SDPD…DGVD). Polar residues predominate over residues 221–231 (PTGTGVNSQIN). 2 stretches are compositionally biased toward basic and acidic residues: residues 256–285 (SDPD…ESKK) and 322–335 (SLER…RVER).

The protein resides in the membrane. The polypeptide is Pathogen-associated molecular patterns-induced protein A70 (Arabidopsis thaliana (Mouse-ear cress)).